Consider the following 1097-residue polypeptide: DNA polymerase catalytic subunit (1097 aa).

The tract at residues 1069–1097 is disordered; the sequence is RGGDDSDGGDSEKENMDTERSSSHEAMET. Residues 1078-1097 show a composition bias toward basic and acidic residues; that stretch reads DSEKENMDTERSSSHEAMET.

It belongs to the DNA polymerase type-B family.

The protein localises to the host nucleus. It carries out the reaction DNA(n) + a 2'-deoxyribonucleoside 5'-triphosphate = DNA(n+1) + diphosphate. In Murid herpesvirus 1 (strain Smith) (MuHV-1), this protein is DNA polymerase catalytic subunit (UL54).